Here is a 219-residue protein sequence, read N- to C-terminus: Protein YNG1 (219 aa).

The PHD-type; degenerate zinc finger occupies 155–204 (EVYCFCRNVSYGPMVACDNPACPFEWFHYGCVGLKQAPKGKWYCSKDCKE). Zn(2+) contacts are provided by Cys-158, Cys-160, Cys-171, Cys-176, His-182, Cys-185, Cys-198, and Cys-202.

The protein belongs to the ING family. In terms of assembly, component of the NuA3 histone acetyltransferase (HAT) complex. The NuA3 HAT complex has 2 functionally distinct forms that participate in transcription. The NuA3a HAT complex is composed of at least NTO1, SAS3, TAF14, YNG1 and EAF6. The NuA3b HAT complex contains an additional subunit, PDP3. Interacts with H3K4me3 and to a lesser extent with H3K4me2.

The protein localises to the nucleus. In terms of biological role, histone-binding component of the NuA3a histone acetyltransferase complex. Targets the NuA3a HAT complex via histone H3K4me3 to facilitate transcription initiation at promoter regions. SAS3 then acetylates H3K14, leading to transcription initiation at a subset of genes. YNG1 is required for the HAT activity of NuA3 but not for its integrity. Mediates the interaction of SAS3 with nucleosomes. This is Protein YNG1 (YNG1) from Saccharomyces cerevisiae (strain ATCC 204508 / S288c) (Baker's yeast).